Consider the following 276-residue polypeptide: Glutamate racemase (276 aa).

Residues 12–13 (DS) and 44–45 (YG) contribute to the substrate site. Residue cysteine 76 is the Proton donor/acceptor of the active site. 77 to 78 (NT) is a substrate binding site. The Proton donor/acceptor role is filled by cysteine 187. Position 188 to 189 (188 to 189 (TH)) interacts with substrate.

Belongs to the aspartate/glutamate racemases family.

The catalysed reaction is L-glutamate = D-glutamate. Its pathway is cell wall biogenesis; peptidoglycan biosynthesis. Functionally, provides the (R)-glutamate required for cell wall biosynthesis. This Granulibacter bethesdensis (strain ATCC BAA-1260 / CGDNIH1) protein is Glutamate racemase.